Reading from the N-terminus, the 397-residue chain is Autophagy-related protein 29 (397 aa).

Positions 71–397 (ATAAVRNSGP…RSRYTSSSNQ (327 aa)) are disordered. Over residues 230-240 (QYEDDDDDESE) the composition is skewed to acidic residues. The segment covering 245–259 (PYTSPSSKTSAQDLG) has biased composition (polar residues). Residues 269–282 (SGKRPHKSHGKPAI) are compositionally biased toward basic residues. Basic and acidic residues-rich tracts occupy residues 300–309 (KPDKTDRSTE) and 330–341 (GGKDKGYSREGS). 2 stretches are compositionally biased toward polar residues: residues 343–363 (GTPS…TQSA) and 381–397 (FSIS…SSNQ).

It belongs to the ATG29 family. As to quaternary structure, forms a stable complex with ATG17 and ATG31. Interacts directly with ATG31. The ATG17-ATG29-ATG31 complex interacts with the ATG1-ATG13 complex. Note=The interaction with the ATG1-ATG13 complex is induced by starvation.

It is found in the preautophagosomal structure. Functionally, plays a role in autophagy. Functions at the preautophagosomal structure (PAS) in order to form normal autophagosomes under starvation conditions. Also plays a role in mitophagy. Autophagy is required for proper vegetative growth, asexual/sexual reproduction, and full virulence. Autophagy is particularly involved in the biosynthesis of deoxynivalenol (DON), an important virulence determinant. The polypeptide is Autophagy-related protein 29 (Gibberella zeae (strain ATCC MYA-4620 / CBS 123657 / FGSC 9075 / NRRL 31084 / PH-1) (Wheat head blight fungus)).